Reading from the N-terminus, the 105-residue chain is Thioredoxin (105 aa).

A Thioredoxin domain is found at 2 to 105 (VKLIESKEAF…KLEATITEFA (104 aa)). Lysine 3 bears the N6-acetyllysine mark. Position 8 is an N6-succinyllysine (lysine 8). Residues cysteine 32 and cysteine 35 each act as nucleophile in the active site. Cysteines 32 and 35 form a disulfide. The residue at position 39 (lysine 39) is an N6-acetyllysine. Residues cysteine 62 and cysteine 69 each carry the S-nitrosocysteine modification. Residue cysteine 73 is modified to S-nitrosocysteine; alternate. Lysine 94 carries the N6-acetyllysine; alternate modification. The residue at position 94 (lysine 94) is an N6-succinyllysine; alternate.

The protein belongs to the thioredoxin family. In terms of assembly, homodimer; disulfide-linked. Interacts with TXNIP through the redox-active site. Interacts with MAP3K5 and CASP3. Interacts with APEX1; the interaction stimulates the FOS/JUN AP-1 DNA-binding activity in a redox-dependent manner. Post-translationally, in the fully reduced protein, both Cys-69 and Cys-73 are nitrosylated in response to nitric oxide (NO). When two disulfide bonds are present in the protein, only Cys-73 is nitrosylated. Cys-73 can serve as donor for nitrosylation of target proteins.

Its subcellular location is the nucleus. It localises to the cytoplasm. It is found in the secreted. Functionally, participates in various redox reactions through the reversible oxidation of its active center dithiol to a disulfide and catalyzes dithiol-disulfide exchange reactions. Plays a role in the reversible S-nitrosylation of cysteine residues in target proteins, and thereby contributes to the response to intracellular nitric oxide. Nitrosylates the active site Cys of CASP3 in response to nitric oxide (NO), and thereby inhibits caspase-3 activity. Induces the FOS/JUN AP-1 DNA binding activity in ionizing radiation (IR) cells through its oxidation/reduction status and stimulates AP-1 transcriptional activity. This chain is Thioredoxin (Txn), found in Rattus norvegicus (Rat).